Here is a 132-residue protein sequence, read N- to C-terminus: Ribosome-binding factor A (132 aa).

The segment at 113–132 is disordered; the sequence is EANSTRAKDDDEADAPAKDD.

Belongs to the RbfA family. Monomer. Binds 30S ribosomal subunits, but not 50S ribosomal subunits or 70S ribosomes.

It localises to the cytoplasm. Functionally, one of several proteins that assist in the late maturation steps of the functional core of the 30S ribosomal subunit. Associates with free 30S ribosomal subunits (but not with 30S subunits that are part of 70S ribosomes or polysomes). Required for efficient processing of 16S rRNA. May interact with the 5'-terminal helix region of 16S rRNA. The sequence is that of Ribosome-binding factor A from Burkholderia ambifaria (strain MC40-6).